The chain runs to 647 residues: RalA-binding protein 1 (647 aa).

Disordered stretches follow at residues 1–151 (MTEC…EKKC) and 163–186 (WKEKKKKKKPTQEPEVPQTDAPSL). Position 2 is an N-acetylthreonine (T2). A compositionally biased stretch (polar residues) spans 24–33 (LTRTPSSEEI). A phosphoserine mark is found at S29, S30, and S34. The residue at position 44 (T44) is a Phosphothreonine. Residues S48 and S62 each carry the phosphoserine modification. Basic and acidic residues predominate over residues 52–68 (DILHEPPDIVSDDEKDH). Residue 69-74 (GKKKGK) coordinates ATP. Basic residues predominate over residues 69-79 (GKKKGKFKKKE). Residues S92 and S93 each carry the phosphoserine modification. The segment covering 102-118 (KMKRSKGIHVFKKPSFS) has biased composition (basic residues). Positions 102 to 119 (KMKRSKGIHVFKKPSFSK) are nuclear localization signal. Residues 119–151 (KKKEKDFKIKEKPKEEKHKEEKHKEEKHKEKKC) show a composition bias toward basic and acidic residues. A mediates association with membranes and could form transmembrane domains region spans residues 154–219 (FTAADVVKQW…PAVFRECVDY (66 aa)). One can recognise a Rho-GAP domain in the interval 192–380 (APFADAVERT…VLLKQVTRPL (189 aa)). Residues 403–499 (RRQEFLLNCL…LTEQEELLAM (97 aa)) form a mediates interaction with RALA and RALB region. An ATP-binding site is contributed by 418–425 (GGIKDFSK). Phosphoserine occurs at positions 461 and 463. The tract at residues 500-647 (EQFLRRQIAS…PSKDRKETPI (148 aa)) is mediates interaction with REPS1 and REPS2. Disordered regions lie at residues 525-550 (QSRQHGRSETEEYSSDSESESEDEEE) and 601-647 (EQQL…ETPI). The span at 535–550 (EEYSSDSESESEDEEE) shows a compositional bias: acidic residues. Positions 628-647 (RAAKEQAKPSPSKDRKETPI) are enriched in basic and acidic residues. Phosphoserine is present on S637.

In terms of assembly, interacts with the GTP-bound form of RALA (via effector domain); during mitosis, recruits RALBP1 to the mitochondrion where it promotes DNM1L phosphorylation and mitochondrial fission. Interacts with DNM1L; mediates its mitotic kinase cyclin B-CDK1-mediated phosphorylation during mitosis to promote mitochondrial fission. Interacts with the mitotic kinase cyclin B-CDK1 during mitosis. Interacts with the GTP-bound form of RALB (via effector domain). Interacts with REPS1; the interaction is direct and does not affect RALA-binding nor GTPase activator activity of RALBP1. Interacts with REPS2; the interaction is direct and does not affect RALA-binding nor GTPase activator activity of RALBP1. Interacts with EPN1, NUMB and TFAP2A during interphase and mitosis. Interacts with AP2M1; as part of the AP2 complex. Interacts with CDC42. Interacts with RAC1. Post-translationally, tyrosine-phosphorylated upon stimulation of cells with EGF. In terms of processing, may undergo proteolytic cleavage to give peptides which reassemble to form a transporter complex. In terms of tissue distribution, ubiquitously expressed.

It is found in the cell membrane. It localises to the cytoplasm. The protein resides in the cytosol. Its subcellular location is the cytoskeleton. The protein localises to the spindle pole. It is found in the nucleus. It localises to the mitochondrion. It catalyses the reaction an S-substituted glutathione(in) + ATP + H2O = an S-substituted glutathione(out) + ADP + phosphate + H(+). The catalysed reaction is ATP + H2O + xenobioticSide 1 = ADP + phosphate + xenobioticSide 2.. It carries out the reaction leukotriene C4(in) + ATP + H2O = leukotriene C4(out) + ADP + phosphate + H(+). Its function is as follows. Multifunctional protein that functions as a downstream effector of RALA and RALB. As a GTPase-activating protein/GAP can inactivate CDC42 and RAC1 by stimulating their GTPase activity. As part of the Ral signaling pathway, may also regulate ligand-dependent EGF and insulin receptors-mediated endocytosis. During mitosis, may act as a scaffold protein in the phosphorylation of EPSIN/EPN1 by the mitotic kinase cyclin B-CDK1, preventing endocytosis during that phase of the cell cycle. During mitosis, also controls mitochondrial fission as an effector of RALA. Recruited to mitochondrion by RALA, acts as a scaffold to foster the mitotic kinase cyclin B-CDK1-mediated phosphorylation and activation of DNM1L. Functionally, could also function as a primary ATP-dependent active transporter for glutathione conjugates of electrophiles. May also actively catalyze the efflux of a wide range of substrates including xenobiotics like doxorubicin (DOX) contributing to cell multidrug resistance. The chain is RalA-binding protein 1 from Rattus norvegicus (Rat).